Consider the following 577-residue polypeptide: Arginine--tRNA ligase (577 aa).

Positions 122 to 132 (PNVAKEMHVGH) match the 'HIGH' region motif.

It belongs to the class-I aminoacyl-tRNA synthetase family. As to quaternary structure, monomer.

Its subcellular location is the cytoplasm. It carries out the reaction tRNA(Arg) + L-arginine + ATP = L-arginyl-tRNA(Arg) + AMP + diphosphate. In Salmonella paratyphi B (strain ATCC BAA-1250 / SPB7), this protein is Arginine--tRNA ligase.